We begin with the raw amino-acid sequence, 78 residues long: Acyl carrier protein (78 aa).

Residues 2-77 (STIEERVKKI…EAIDYINAHA (76 aa)) enclose the Carrier domain. Position 37 is an O-(pantetheine 4'-phosphoryl)serine (S37).

It belongs to the acyl carrier protein (ACP) family. 4'-phosphopantetheine is transferred from CoA to a specific serine of apo-ACP by AcpS. This modification is essential for activity because fatty acids are bound in thioester linkage to the sulfhydryl of the prosthetic group.

It localises to the cytoplasm. It functions in the pathway lipid metabolism; fatty acid biosynthesis. Functionally, carrier of the growing fatty acid chain in fatty acid biosynthesis. In Stutzerimonas stutzeri (strain A1501) (Pseudomonas stutzeri), this protein is Acyl carrier protein.